Here is a 205-residue protein sequence, read N- to C-terminus: Macrophage immunometabolism regulator (205 aa).

Residues 1–40 (MEVDINGVNRTNNSVPSTAEGSSPSKPDPEKPRCSSTPCS) form a disordered region. Residues 8 to 25 (VNRTNNSVPSTAEGSSPS) show a composition bias toward polar residues.

This sequence belongs to the UNC119-binding protein family. In terms of assembly, interacts with unc119 family proteins; interaction preferentially takes place when unc119 proteins are unliganded with myristoylated proteins.

It is found in the cytoplasm. The protein localises to the cell projection. Its subcellular location is the cilium. May play a role in immune regulation through regulation of the macrophage function. May also play a role in trafficking of proteins via its interaction with unc119 family cargo adapters. May play a role in ciliary membrane localization. This is Macrophage immunometabolism regulator (macir) from Xenopus laevis (African clawed frog).